A 214-amino-acid chain; its full sequence is Nucleoplasmin-2 (214 aa).

Residues 119–214 (ERYEASDLTW…ARAKKPGFKK (96 aa)) form a disordered region. Residues 127–155 (TWEEEEEEEGEEEEEEEEDDEDEDADISL) show a composition bias toward acidic residues. The interval 129 to 152 (EEEEEEEGEEEEEEEEDDEDEDAD) is acidic tract A2. A Bipartite nuclear localization signal motif is present at residues 165 to 180 (KRLVPQKQASVAKKKK). Over residues 181–197 (LEKEEEEIRASVRDKSP) the composition is skewed to basic and acidic residues. Over residues 198–214 (VKKAKATARAKKPGFKK) the composition is skewed to basic residues.

Belongs to the nucleoplasmin family. Homopentamer, when bound to H2A-H2B dimers only. Homodecamer of two stacked pentamers, when bound to H2A-H2B dimers and H3-H4 tetramers simultaneously.

The protein localises to the nucleus. Functionally, core histones chaperone involved in chromatin reprogramming, specially during fertilization and early embryonic development. Probably involved in sperm DNA decondensation during fertilization. In Homo sapiens (Human), this protein is Nucleoplasmin-2 (NPM2).